Consider the following 168-residue polypeptide: Ribosome rescue factor SmrB (168 aa).

The region spanning 92–167 (LDLHGLTKEQ…GDAAILILFE (76 aa)) is the Smr domain.

This sequence belongs to the SmrB family. Associates with collided ribosomes, but not with correctly translating polysomes.

Its function is as follows. Acts as a ribosome collision sensor. Detects stalled/collided disomes (pairs of ribosomes where the leading ribosome is stalled and a second ribosome has collided with it) and endonucleolytically cleaves mRNA at the 5' boundary of the stalled ribosome. Stalled/collided disomes form a new interface (primarily via the 30S subunits) that binds SmrB. Cleaved mRNA becomes available for tmRNA ligation, leading to ribosomal subunit dissociation and rescue of stalled ribosomes. The chain is Ribosome rescue factor SmrB from Pasteurella multocida (strain Pm70).